Here is a 1245-residue protein sequence, read N- to C-terminus: Pesticidal crystal protein Cry5Ba (1245 aa).

Residues 1219 to 1245 (PLPTDDQSSDGNTTSNTNSNTSMNNNQ) form a disordered region. Positions 1222 to 1245 (TDDQSSDGNTTSNTNSNTSMNNNQ) are enriched in low complexity.

This sequence belongs to the delta endotoxin family.

Promotes colloidosmotic lysis by binding to the midgut epithelial cells of hymenopteran species. This chain is Pesticidal crystal protein Cry5Ba (cry5Ba), found in Bacillus thuringiensis.